A 503-amino-acid polypeptide reads, in one-letter code: Nondiscriminating glutamyl-tRNA synthetase EARS2, mitochondrial (503 aa).

Residues Met1–Phe22 constitute a mitochondrion transit peptide. L-glutamate is bound at residue Arg21 to Ala23. The short motif at Pro26–Gly34 is the 'HIGH' region element. Residue His31 coordinates ATP. L-glutamate-binding positions include Glu57, Tyr209–Ser213, and Arg227. ATP is bound by residues Glu230 and Lys265–Arg269. The short motif at Lys265–Arg269 is the 'KMSKS' region element.

Belongs to the class-I aminoacyl-tRNA synthetase family. Glutamate--tRNA ligase type 1 subfamily.

The protein resides in the mitochondrion matrix. It carries out the reaction tRNA(Glx) + L-glutamate + ATP = L-glutamyl-tRNA(Glx) + AMP + diphosphate. The enzyme catalyses tRNA(Glu) + L-glutamate + ATP = L-glutamyl-tRNA(Glu) + AMP + diphosphate. The catalysed reaction is tRNA(Gln) + L-glutamate + ATP = L-glutamyl-tRNA(Gln) + AMP + diphosphate. Non-discriminating glutamyl-tRNA synthetase that catalyzes aminoacylation of both mitochondrial tRNA(Glu) and tRNA(Gln) and participates in RNA aminoacylation for mitochondrial protein translation. Attachs glutamate to tRNA(Glu) or tRNA(Gln) in a two-step reaction: glutamate is first activated by ATP to form Glu-AMP and then transferred to the acceptor end of tRNA(Glu) or tRNA(Gln). The sequence is that of Nondiscriminating glutamyl-tRNA synthetase EARS2, mitochondrial from Danio rerio (Zebrafish).